The primary structure comprises 396 residues: Elongation factor Tu (396 aa).

One can recognise a tr-type G domain in the interval 10–206 (KPHVNVGTIG…ALDSFIPEPT (197 aa)). Positions 19 to 26 (GHVDHGKT) are G1. 19–26 (GHVDHGKT) contributes to the GTP binding site. T26 is a binding site for Mg(2+). The tract at residues 60-64 (GITIS) is G2. The G3 stretch occupies residues 81-84 (DCPG). GTP is bound by residues 81–85 (DCPGH) and 136–139 (NKAD). The tract at residues 136-139 (NKAD) is G4. A G5 region spans residues 174–176 (SAR).

It belongs to the TRAFAC class translation factor GTPase superfamily. Classic translation factor GTPase family. EF-Tu/EF-1A subfamily. In terms of assembly, monomer.

The protein resides in the cytoplasm. The catalysed reaction is GTP + H2O = GDP + phosphate + H(+). Functionally, GTP hydrolase that promotes the GTP-dependent binding of aminoacyl-tRNA to the A-site of ribosomes during protein biosynthesis. This chain is Elongation factor Tu, found in Xanthomonas euvesicatoria pv. vesicatoria (strain 85-10) (Xanthomonas campestris pv. vesicatoria).